Here is a 393-residue protein sequence, read N- to C-terminus: S-adenosylmethionine synthase (393 aa).

An ATP-binding site is contributed by histidine 16. Residue aspartate 18 participates in Mg(2+) binding. A K(+)-binding site is contributed by glutamate 44. Positions 57 and 100 each coordinate L-methionine. Residues glutamine 100 to histidine 110 are flexible loop. ATP contacts are provided by residues aspartate 167–lysine 169, arginine 238–phenylalanine 239, aspartate 247, arginine 253–lysine 254, alanine 270, and lysine 274. Residue aspartate 247 participates in L-methionine binding. Lysine 278 is a binding site for L-methionine.

The protein belongs to the AdoMet synthase family. Homotetramer; dimer of dimers. The cofactor is Mg(2+). Requires K(+) as cofactor.

The protein localises to the cytoplasm. The catalysed reaction is L-methionine + ATP + H2O = S-adenosyl-L-methionine + phosphate + diphosphate. Its pathway is amino-acid biosynthesis; S-adenosyl-L-methionine biosynthesis; S-adenosyl-L-methionine from L-methionine: step 1/1. Catalyzes the formation of S-adenosylmethionine (AdoMet) from methionine and ATP. The overall synthetic reaction is composed of two sequential steps, AdoMet formation and the subsequent tripolyphosphate hydrolysis which occurs prior to release of AdoMet from the enzyme. The protein is S-adenosylmethionine synthase of Leptothrix cholodnii (strain ATCC 51168 / LMG 8142 / SP-6) (Leptothrix discophora (strain SP-6)).